The sequence spans 330 residues: Aspartate--ammonia ligase (330 aa).

It belongs to the class-II aminoacyl-tRNA synthetase family. AsnA subfamily.

The protein resides in the cytoplasm. It catalyses the reaction L-aspartate + NH4(+) + ATP = L-asparagine + AMP + diphosphate + H(+). It participates in amino-acid biosynthesis; L-asparagine biosynthesis; L-asparagine from L-aspartate (ammonia route): step 1/1. This is Aspartate--ammonia ligase from Streptococcus pyogenes serotype M6 (strain ATCC BAA-946 / MGAS10394).